Reading from the N-terminus, the 348-residue chain is Anthranilate phosphoribosyltransferase (348 aa).

5-phospho-alpha-D-ribose 1-diphosphate is bound by residues glycine 84, 87 to 88 (GD), threonine 92, 94 to 97 (NITT), 112 to 120 (KHGNRSVSS), and serine 124. Glycine 84 is an anthranilate binding site. Residue threonine 96 coordinates Mg(2+). Asparagine 115 contacts anthranilate. Arginine 170 contacts anthranilate. 2 residues coordinate Mg(2+): aspartate 228 and glutamate 229.

This sequence belongs to the anthranilate phosphoribosyltransferase family. As to quaternary structure, homodimer. Requires Mg(2+) as cofactor.

It carries out the reaction N-(5-phospho-beta-D-ribosyl)anthranilate + diphosphate = 5-phospho-alpha-D-ribose 1-diphosphate + anthranilate. It participates in amino-acid biosynthesis; L-tryptophan biosynthesis; L-tryptophan from chorismate: step 2/5. Its function is as follows. Catalyzes the transfer of the phosphoribosyl group of 5-phosphorylribose-1-pyrophosphate (PRPP) to anthranilate to yield N-(5'-phosphoribosyl)-anthranilate (PRA). The chain is Anthranilate phosphoribosyltransferase from Corynebacterium glutamicum (strain R).